The chain runs to 341 residues: tRNA N6-adenosine threonylcarbamoyltransferase (341 aa).

Residues H111 and H115 each coordinate Fe cation. Substrate contacts are provided by residues 133–137 (VVSGG), D166, G179, D183, and N271. D299 is a binding site for Fe cation.

This sequence belongs to the KAE1 / TsaD family. Fe(2+) serves as cofactor.

It is found in the cytoplasm. The catalysed reaction is L-threonylcarbamoyladenylate + adenosine(37) in tRNA = N(6)-L-threonylcarbamoyladenosine(37) in tRNA + AMP + H(+). Required for the formation of a threonylcarbamoyl group on adenosine at position 37 (t(6)A37) in tRNAs that read codons beginning with adenine. Is involved in the transfer of the threonylcarbamoyl moiety of threonylcarbamoyl-AMP (TC-AMP) to the N6 group of A37, together with TsaE and TsaB. TsaD likely plays a direct catalytic role in this reaction. In Fusobacterium nucleatum subsp. nucleatum (strain ATCC 25586 / DSM 15643 / BCRC 10681 / CIP 101130 / JCM 8532 / KCTC 2640 / LMG 13131 / VPI 4355), this protein is tRNA N6-adenosine threonylcarbamoyltransferase.